A 1036-amino-acid chain; its full sequence is uncharacterized protein (1036 aa).

Positions 1–24 (MKRVGLIGVIMAALLVISATPVMA) are cleaved as a signal peptide. A helical membrane pass occupies residues 1011–1033 (GGGVPGFEAVFAIAGLLAVAYLL).

It is found in the membrane. This is an uncharacterized protein from Archaeoglobus fulgidus (strain ATCC 49558 / DSM 4304 / JCM 9628 / NBRC 100126 / VC-16).